A 129-amino-acid polypeptide reads, in one-letter code: Lysozyme C (129 aa).

The region spanning 1 to 129 is the C-type lysozyme domain; that stretch reads KVYGRCELAA…VNAWTRGCRL (129 aa). 4 cysteine pairs are disulfide-bonded: Cys-6-Cys-127, Cys-30-Cys-115, Cys-64-Cys-80, and Cys-76-Cys-94. Active-site residues include Glu-35 and Asp-52.

Belongs to the glycosyl hydrolase 22 family. As to quaternary structure, monomer.

It is found in the secreted. The enzyme catalyses Hydrolysis of (1-&gt;4)-beta-linkages between N-acetylmuramic acid and N-acetyl-D-glucosamine residues in a peptidoglycan and between N-acetyl-D-glucosamine residues in chitodextrins.. In terms of biological role, lysozymes have primarily a bacteriolytic function; those in tissues and body fluids are associated with the monocyte-macrophage system and enhance the activity of immunoagents. The chain is Lysozyme C (LYZ) from Chrysolophus amherstiae (Lady Amherst's pheasant).